The primary structure comprises 1719 residues: Cilia- and flagella-associated protein 43 (1719 aa).

Positions V94–G120 are disordered. WD repeat units follow at residues S122–R165, S174–V214, P226–L263, T308–I345, C413–R452, and L513–R552. The segment at T569–G596 is disordered. 2 WD repeats span residues A697–Q736 and I749–N788. The disordered stretch occupies residues R1022–G1045. The stretch at P1073–E1114 is one WD 9 repeat. Disordered stretches follow at residues M1220 to A1269, A1277 to G1296, and T1325 to A1372. The span at P1221–Q1233 shows a compositional bias: gly residues. Positions A1257–A1269 are enriched in low complexity. Low complexity predominate over residues S1344–G1358. Coiled-coil stretches lie at residues A1524–Q1609 and H1651–T1679. Positions E1685–T1719 are disordered. Residues S1709–T1719 show a composition bias toward polar residues.

The protein belongs to the CFAP43 family.

The protein localises to the cell projection. Its subcellular location is the cilium. It is found in the flagellum. The protein resides in the cytoplasm. It localises to the cytoskeleton. The protein localises to the flagellum axoneme. In terms of biological role, flagellar protein involved in flagellum axoneme organization and function. This chain is Cilia- and flagella-associated protein 43, found in Chlamydomonas reinhardtii (Chlamydomonas smithii).